The primary structure comprises 143 residues: Putative pre-16S rRNA nuclease (143 aa).

The protein belongs to the YqgF nuclease family.

The protein localises to the cytoplasm. In terms of biological role, could be a nuclease involved in processing of the 5'-end of pre-16S rRNA. This is Putative pre-16S rRNA nuclease from Lactobacillus johnsonii (strain CNCM I-12250 / La1 / NCC 533).